A 1321-amino-acid polypeptide reads, in one-letter code: C-Jun-amino-terminal kinase-interacting protein 4 (1321 aa).

The residue at position 1 (methionine 1) is an N-acetylmethionine. Positions 7–95 (VVYQEEPGGS…ITQYEREKAL (89 aa)) constitute an RH1 domain. Residues 66–166 (AQDQEHQVEL…NALHQRHTEM (101 aa)) adopt a coiled-coil conformation. Residues serine 109, serine 183, serine 185, serine 194, and serine 203 each carry the phosphoserine modification. Residues 203–308 (SLGIFPLPAG…EGFVKGTDTS (106 aa)) are disordered. Residue threonine 217 is modified to Phosphothreonine. Polar residues predominate over residues 236-248 (ELSQPRSHTSLKV). Serine 238, serine 251, serine 265, serine 268, and serine 272 each carry phosphoserine. Residues 266 to 285 (DISQGGSKATTPASTANSDV) show a composition bias toward polar residues. Threonine 292 is modified (phosphothreonine). Serine 311, serine 329, serine 332, and serine 347 each carry phosphoserine. Positions 322-332 (AQETRNVSTES) are enriched in polar residues. Positions 322 to 341 (AQETRNVSTESGENEEKSEV) are disordered. Phosphothreonine occurs at positions 348, 365, and 418. Positions 408–534 (REVENLILEN…LQEAVRWTEM (127 aa)) form a coiled coil. A compositionally biased stretch (basic and acidic residues) spans 473 to 489 (LRKARAEAEDARQKAKD). 2 disordered regions span residues 473–500 (LRKARAEAEDARQKAKDDDDSDIPTAQR) and 563–600 (SSNATKKPEPPVNLKYNAPTSHVTPSVKKRSSTLSQLP). Residues 500–604 (RKRFTRVEMA…TLSQLPGDKS (105 aa)) enclose the RH2 domain. Phosphothreonine is present on threonine 586. Residue serine 588 is modified to Phosphoserine. The residue at position 595 (threonine 595) is a Phosphothreonine. Phosphoserine occurs at positions 705, 728, 730, 732, and 733. The stretch at 724–758 (SKQRSASQSSLDKLDQELKEQQKEFKNQEELSSQV) forms a coiled coil. Positions 853–883 (TGAATSPSTNGASPVIEKPPEMETENSEVDE) are disordered. Polar residues predominate over residues 855–864 (AATSPSTNGA). The span at 874–883 (METENSEVDE) shows a compositional bias: acidic residues. Position 1188 is a phosphoserine (serine 1188). A disordered region spans residues 1239–1267 (PQSSSGGADLTADKAGSSAQEPSSQTPLK). Over residues 1255–1266 (SSAQEPSSQTPL) the composition is skewed to polar residues. Position 1264 is a phosphothreonine (threonine 1264).

This sequence belongs to the JIP scaffold family. Homodimer. The homodimer interacts with ARF6, forming a heterotetramer. Homooligomer. Interacts with MAX, MAPK8, MAPK14, MAP3K3, MYC, and MAP2K4. Interacts with KNS2. Interaction with KNS2 is important in the formation of ternary complex with MAPK8. Interacts with PIP4P1. Interacts with PIKFYVE. In terms of processing, phosphorylated by MAPK8 and MAPK14. In terms of tissue distribution, highly expressed in brain, kidney, liver, heart.

It localises to the cytoplasm. It is found in the perinuclear region. Its subcellular location is the lysosome membrane. The JNK-interacting protein (JIP) group of scaffold proteins selectively mediates JNK signaling by aggregating specific components of the MAPK cascade to form a functional JNK signaling module. Regulates lysosomal positioning by acting as an adapter protein which links PIP4P1-positive lysosomes to the dynein-dynactin complex. Assists PIKFYVE selective functionality in microtubule-based endosome-to-TGN trafficking. The polypeptide is C-Jun-amino-terminal kinase-interacting protein 4 (Mus musculus (Mouse)).